The chain runs to 160 residues: 6,7-dimethyl-8-ribityllumazine synthase (160 aa).

Residues Trp-27, 59-61 (AIE), and 81-83 (VVI) contribute to the 5-amino-6-(D-ribitylamino)uracil site. Residue 86 to 87 (QT) coordinates (2S)-2-hydroxy-3-oxobutyl phosphate. The active-site Proton donor is His-89. Asn-114 provides a ligand contact to 5-amino-6-(D-ribitylamino)uracil. Arg-128 contributes to the (2S)-2-hydroxy-3-oxobutyl phosphate binding site.

The protein belongs to the DMRL synthase family. In terms of assembly, homopentamer.

The enzyme catalyses (2S)-2-hydroxy-3-oxobutyl phosphate + 5-amino-6-(D-ribitylamino)uracil = 6,7-dimethyl-8-(1-D-ribityl)lumazine + phosphate + 2 H2O + H(+). The protein operates within cofactor biosynthesis; riboflavin biosynthesis; riboflavin from 2-hydroxy-3-oxobutyl phosphate and 5-amino-6-(D-ribitylamino)uracil: step 1/2. Functionally, catalyzes the formation of 6,7-dimethyl-8-ribityllumazine by condensation of 5-amino-6-(D-ribitylamino)uracil with 3,4-dihydroxy-2-butanone 4-phosphate. This is the penultimate step in the biosynthesis of riboflavin. The chain is 6,7-dimethyl-8-ribityllumazine synthase from Mycolicibacterium paratuberculosis (strain ATCC BAA-968 / K-10) (Mycobacterium paratuberculosis).